Here is a 385-residue protein sequence, read N- to C-terminus: uncharacterized protein (385 aa).

This sequence belongs to the phage portal family. HK97 subfamily.

This is an uncharacterized protein from Rickettsia bellii (strain RML369-C).